We begin with the raw amino-acid sequence, 33 residues long: Photosystem II reaction center protein Psb30 (33 aa).

Residues 5-25 (VIAQLTVLALIVASGPLVIAL) form a helical membrane-spanning segment.

The protein belongs to the Psb30/Ycf12 family. PSII is composed of 1 copy each of membrane proteins PsbA, PsbB, PsbC, PsbD, PsbE, PsbF, PsbH, PsbI, PsbJ, PsbK, PsbL, PsbM, PsbT, PsbX, PsbY, PsbZ, Psb30/Ycf12, peripheral proteins of the oxygen-evolving complex and a large number of cofactors. It forms dimeric complexes.

It localises to the plastid. It is found in the chloroplast thylakoid membrane. In terms of biological role, a core subunit of photosystem II (PSII), probably helps stabilize the reaction center. This Marchantia polymorpha (Common liverwort) protein is Photosystem II reaction center protein Psb30.